Reading from the N-terminus, the 314-residue chain is Aspartate carbamoyltransferase catalytic subunit (314 aa).

Residues R58 and T59 each contribute to the carbamoyl phosphate site. K86 lines the L-aspartate pocket. Residues R108, H136, and Q139 each coordinate carbamoyl phosphate. Residues R169 and R223 each coordinate L-aspartate. The carbamoyl phosphate site is built by G264 and P265.

This sequence belongs to the aspartate/ornithine carbamoyltransferase superfamily. ATCase family. In terms of assembly, heterododecamer (2C3:3R2) of six catalytic PyrB chains organized as two trimers (C3), and six regulatory PyrI chains organized as three dimers (R2).

It catalyses the reaction carbamoyl phosphate + L-aspartate = N-carbamoyl-L-aspartate + phosphate + H(+). It participates in pyrimidine metabolism; UMP biosynthesis via de novo pathway; (S)-dihydroorotate from bicarbonate: step 2/3. Its function is as follows. Catalyzes the condensation of carbamoyl phosphate and aspartate to form carbamoyl aspartate and inorganic phosphate, the committed step in the de novo pyrimidine nucleotide biosynthesis pathway. The protein is Aspartate carbamoyltransferase catalytic subunit of Jannaschia sp. (strain CCS1).